Here is a 420-residue protein sequence, read N- to C-terminus: Serine hydroxymethyltransferase (420 aa).

Residues leucine 117 and 121-123 (GHL) each bind (6S)-5,6,7,8-tetrahydrofolate. An N6-(pyridoxal phosphate)lysine modification is found at lysine 226.

The protein belongs to the SHMT family. As to quaternary structure, homodimer. Requires pyridoxal 5'-phosphate as cofactor.

The protein localises to the cytoplasm. It carries out the reaction (6R)-5,10-methylene-5,6,7,8-tetrahydrofolate + glycine + H2O = (6S)-5,6,7,8-tetrahydrofolate + L-serine. It functions in the pathway one-carbon metabolism; tetrahydrofolate interconversion. The protein operates within amino-acid biosynthesis; glycine biosynthesis; glycine from L-serine: step 1/1. Catalyzes the reversible interconversion of serine and glycine with tetrahydrofolate (THF) serving as the one-carbon carrier. This reaction serves as the major source of one-carbon groups required for the biosynthesis of purines, thymidylate, methionine, and other important biomolecules. Also exhibits THF-independent aldolase activity toward beta-hydroxyamino acids, producing glycine and aldehydes, via a retro-aldol mechanism. In Rhodopirellula baltica (strain DSM 10527 / NCIMB 13988 / SH1), this protein is Serine hydroxymethyltransferase.